The chain runs to 305 residues: Peroxisome assembly protein 26 (305 aa).

Residues Met1 to His246 are Cytoplasmic-facing. The helical; Signal-anchor for type II membrane protein transmembrane segment at Leu247–Leu267 threads the bilayer. Over Arg268 to Asp305 the chain is Peroxisomal matrix.

Belongs to the peroxin-26 family. As to quaternary structure, interacts (via its cytoplasmic domain) with PEX6; interaction is direct and is ATP-dependent. Interacts with PEX1; interaction is indirect and is mediated via interaction with PEX6.

It localises to the peroxisome membrane. Functionally, peroxisomal docking factor that anchors PEX1 and PEX6 to peroxisome membranes. PEX26 is therefore required for the formation of the PEX1-PEX6 AAA ATPase complex, a complex that mediates the extraction of the PEX5 receptor from peroxisomal membrane. This chain is Peroxisome assembly protein 26, found in Mus musculus (Mouse).